Reading from the N-terminus, the 256-residue chain is Triosephosphate isomerase (256 aa).

9-11 (NWK) serves as a coordination point for substrate. The active-site Electrophile is the His95. Glu167 (proton acceptor) is an active-site residue. Substrate is bound by residues Gly173, Ser212, and 233–234 (GG).

Belongs to the triosephosphate isomerase family. As to quaternary structure, homodimer.

Its subcellular location is the cytoplasm. The catalysed reaction is D-glyceraldehyde 3-phosphate = dihydroxyacetone phosphate. It functions in the pathway carbohydrate biosynthesis; gluconeogenesis. The protein operates within carbohydrate degradation; glycolysis; D-glyceraldehyde 3-phosphate from glycerone phosphate: step 1/1. Functionally, involved in the gluconeogenesis. Catalyzes stereospecifically the conversion of dihydroxyacetone phosphate (DHAP) to D-glyceraldehyde-3-phosphate (G3P). The sequence is that of Triosephosphate isomerase from Proteus mirabilis (strain HI4320).